The following is a 607-amino-acid chain: UvrABC system protein C (607 aa).

Residues 15-93 enclose the GIY-YIG domain; sequence RKPGVYRMLD…IKELKPPYNI (79 aa). Positions 203 to 238 constitute a UVR domain; sequence REVADQLSTDMEAAAAALEFEKAALLRDQLAAIQAV. The segment covering 542–551 has biased composition (basic residues); the sequence is HRARRGKARK. Positions 542-561 are disordered; it reads HRARRGKARKQSTLDEIPGI.

Belongs to the UvrC family. Interacts with UvrB in an incision complex.

The protein localises to the cytoplasm. The UvrABC repair system catalyzes the recognition and processing of DNA lesions. UvrC both incises the 5' and 3' sides of the lesion. The N-terminal half is responsible for the 3' incision and the C-terminal half is responsible for the 5' incision. In Alcanivorax borkumensis (strain ATCC 700651 / DSM 11573 / NCIMB 13689 / SK2), this protein is UvrABC system protein C.